The sequence spans 407 residues: Argininosuccinate synthase (407 aa).

Residues 16 to 24 (AYSGGLDTS) and Ala44 each bind ATP. Positions 96 and 101 each coordinate L-citrulline. Gly126 contributes to the ATP binding site. 3 residues coordinate L-aspartate: Thr128, Asn132, and Asp133. Asn132 is a binding site for L-citrulline. Arg136, Ser185, Ser194, Glu270, and Tyr282 together coordinate L-citrulline.

Belongs to the argininosuccinate synthase family. Type 1 subfamily. As to quaternary structure, homotetramer.

It is found in the cytoplasm. The enzyme catalyses L-citrulline + L-aspartate + ATP = 2-(N(omega)-L-arginino)succinate + AMP + diphosphate + H(+). The protein operates within amino-acid biosynthesis; L-arginine biosynthesis; L-arginine from L-ornithine and carbamoyl phosphate: step 2/3. The protein is Argininosuccinate synthase of Shewanella loihica (strain ATCC BAA-1088 / PV-4).